The following is a 402-amino-acid chain: S-adenosylmethionine synthase (402 aa).

His-15 lines the ATP pocket. Residue Asp-17 coordinates Mg(2+). K(+) is bound at residue Glu-43. Glu-56 and Gln-99 together coordinate L-methionine. The interval 99–109 (QSPDIAQGVDT) is flexible loop. Residues 174-176 (DGK), 247-248 (RF), Asp-256, 262-263 (RK), Ala-279, and Lys-283 each bind ATP. L-methionine is bound at residue Asp-256. Lys-287 is a binding site for L-methionine.

It belongs to the AdoMet synthase family. Homotetramer; dimer of dimers. Mg(2+) serves as cofactor. K(+) is required as a cofactor.

It is found in the cytoplasm. It catalyses the reaction L-methionine + ATP + H2O = S-adenosyl-L-methionine + phosphate + diphosphate. It participates in amino-acid biosynthesis; S-adenosyl-L-methionine biosynthesis; S-adenosyl-L-methionine from L-methionine: step 1/1. Its function is as follows. Catalyzes the formation of S-adenosylmethionine (AdoMet) from methionine and ATP. The overall synthetic reaction is composed of two sequential steps, AdoMet formation and the subsequent tripolyphosphate hydrolysis which occurs prior to release of AdoMet from the enzyme. In Streptomyces avermitilis (strain ATCC 31267 / DSM 46492 / JCM 5070 / NBRC 14893 / NCIMB 12804 / NRRL 8165 / MA-4680), this protein is S-adenosylmethionine synthase.